A 222-amino-acid polypeptide reads, in one-letter code: MRLILPADTEGIFLERKSRFTGVALVEGKKTLIHIHNTGRLPLLKKGKRVLLKRAESDRRKTGWDLLAVEHRNEFVFVHSGFHSIVAGKILEELFPGSTIESEKRFENSRFDFLIDRRTFVEVKGCTYEEDGVAMFPDAPTGRGRRHIEELIRSVKSGFKALLLILVFLESDCFLPNRSVDPAFSEIFWRALNSGVNIDVFRVKYDGEYLCSTEKLSICEEV.

It belongs to the SfsA family.

The chain is Sugar fermentation stimulation protein homolog from Thermotoga maritima (strain ATCC 43589 / DSM 3109 / JCM 10099 / NBRC 100826 / MSB8).